Reading from the N-terminus, the 232-residue chain is Large ribosomal subunit protein uL1 (232 aa).

Belongs to the universal ribosomal protein uL1 family. As to quaternary structure, part of the 50S ribosomal subunit.

Functionally, binds directly to 23S rRNA. The L1 stalk is quite mobile in the ribosome, and is involved in E site tRNA release. Protein L1 is also a translational repressor protein, it controls the translation of the L11 operon by binding to its mRNA. The chain is Large ribosomal subunit protein uL1 from Chlamydia trachomatis serovar L2 (strain ATCC VR-902B / DSM 19102 / 434/Bu).